A 277-amino-acid polypeptide reads, in one-letter code: Probable endonuclease 4 (277 aa).

9 residues coordinate Zn(2+): H67, H107, E142, D176, H179, H211, D224, H226, and E256.

It belongs to the AP endonuclease 2 family. Zn(2+) serves as cofactor.

It carries out the reaction Endonucleolytic cleavage to 5'-phosphooligonucleotide end-products.. Its function is as follows. Endonuclease IV plays a role in DNA repair. It cleaves phosphodiester bonds at apurinic or apyrimidinic (AP) sites, generating a 3'-hydroxyl group and a 5'-terminal sugar phosphate. The polypeptide is Probable endonuclease 4 (Clostridium beijerinckii (strain ATCC 51743 / NCIMB 8052) (Clostridium acetobutylicum)).